We begin with the raw amino-acid sequence, 386 residues long: L-lactate oxidase (386 aa).

Residues 16 to 382 (AQAPFPICFA…RTITLVKNDG (367 aa)) enclose the FMN hydroxy acid dehydrogenase domain. Residue Tyr-42 coordinates pyruvate. FMN contacts are provided by residues 95–97 (PVG), Ser-124, and Gln-146. Tyr-148 provides a ligand contact to pyruvate. Thr-174 contributes to the FMN binding site. Arg-183 is a pyruvate binding site. Residues Lys-253 and Ser-275 each contribute to the FMN site. Residues His-277 and Arg-280 each contribute to the pyruvate site. His-277 acts as the Proton acceptor in catalysis. Residues 308–312 (DSGVY) and Arg-332 contribute to the FMN site.

This sequence belongs to the FMN-dependent alpha-hydroxy acid dehydrogenase family. In terms of assembly, homotetramer. FMN is required as a cofactor.

The catalysed reaction is a (2S)-2-hydroxycarboxylate + O2 = a 2-oxocarboxylate + H2O2. It catalyses the reaction (S)-lactate + O2 = pyruvate + H2O2. It carries out the reaction 2-hydroxyoctanoate + O2 = 2-oxooctanoate + H2O2. The enzyme catalyses mandelate + O2 = phenylglyoxylate + H2O2. The catalysed reaction is 2-hydroxyoctadecanoate + O2 = 2-oxooctadecanoate + H2O2. It catalyses the reaction (S)-2-hydroxyglutarate + O2 = H2O2 + 2-oxoglutarate. Functionally, oxidase that catalyzes the oxidation of a broad range of 2-hydroxyacids in vitro, such as (S)-lactate, 2-hydroxyoctanoate, mandelate, 2-hydroxyoctadecanoate and (S)-2-hydroxyglutarate, to the corresponding 2-oxoacids, with a reduction of O2 to H2O2. May be involved in the utilization of L-lactate as an energy source for growth. In Lysinibacillus sphaericus (strain C3-41), this protein is L-lactate oxidase.